A 290-amino-acid polypeptide reads, in one-letter code: MPSTREIRRRIRSVKNLAQITRAMEMVSASKMRRAQRNVLATRPYADRLLDVMGELTGRAVGMRRGTLLEVRPVVQGVALIVVTPDRGLAGSLVANVLRRASRFILDEQEKKHTVEVLAIGKKGRDFMVRTHQNLVAEVTKLGDHPRLTDILGISTHVINGFLGGRYDEVYVLYSQFVNTLVQRPTIKRLLPIDPPHEPAERMVDYTYEPSQEEVLRELLPRFVEVQLYQAVLEAIASEHSARMVAMRNATDNAKELQRDLTLSYNKTRQANITKEVSEIASGAAALAEM.

The protein belongs to the ATPase gamma chain family. F-type ATPases have 2 components, CF(1) - the catalytic core - and CF(0) - the membrane proton channel. CF(1) has five subunits: alpha(3), beta(3), gamma(1), delta(1), epsilon(1). CF(0) has three main subunits: a, b and c.

The protein localises to the cell membrane. In terms of biological role, produces ATP from ADP in the presence of a proton gradient across the membrane. The gamma chain is believed to be important in regulating ATPase activity and the flow of protons through the CF(0) complex. This is ATP synthase gamma chain from Roseiflexus sp. (strain RS-1).